Reading from the N-terminus, the 188-residue chain is Probable manganese efflux pump MntP (188 aa).

5 consecutive transmembrane segments (helical) span residues 3–23 (ITATVLLAFGMSMDAFAASIG), 66–86 (LEWNHWIAFVLLIFLGGRMII), 106–128 (WLLVTTAIATSLDAMAVGVGLAF), 143–163 (ATLIMSTLGMMVGRFIGSIIG), and 168–188 (ILGGLVLIGIGVQILWTHFHG).

Belongs to the MntP (TC 9.B.29) family.

It localises to the cell inner membrane. Functionally, probably functions as a manganese efflux pump. The protein is Probable manganese efflux pump MntP of Escherichia coli O7:K1 (strain IAI39 / ExPEC).